The chain runs to 79 residues: uncharacterized protein (79 aa).

This is an uncharacterized protein from Ovis aries (Sheep).